The sequence spans 116 residues: uncharacterized protein (116 aa).

Transmembrane regions (helical) follow at residues 8-28 (FMIY…VSFA), 39-59 (GLLL…NPPF), and 75-95 (FLLI…YLMV).

To M.jannaschii MJ1580.

It localises to the cell membrane. This is an uncharacterized protein from Methanothermobacter thermautotrophicus (strain ATCC 29096 / DSM 1053 / JCM 10044 / NBRC 100330 / Delta H) (Methanobacterium thermoautotrophicum).